The following is a 328-amino-acid chain: MEKVEAVTVSNVDPYRRILNKVVSQLLLDKGAGQASNHSLETLTQMLQALIWEIGNSAHNYCELSGRTMPTVGDVSLALINMGISISNLDPYMRKETHVPIPLPPQQTQQRPLSLLQAGIKAPHPHYVPSYFPPMPDPHAYIRTPTHKQPVTEYEAIREKAACQKRDIEKALTKFLCKTTETNNLFPTEDNMFPLIACKPAFPPYAAALNPTDQVFDFEELEYHYLVANRTEDEPSKDDGEEGDSENEEMDGDKSKEEKPELDIKPNSNTNKAILENPNIDNPYLRAATLPKRSKNCPTPGTMPSRSLATTAPTIRTPSTLEITKTNL.

Residues 16–83 form the Histone-fold domain; the sequence is RRILNKVVSQ…DVSLALINMG (68 aa). The interval 229–309 is disordered; that stretch reads NRTEDEPSKD…PGTMPSRSLA (81 aa). Phosphoserine occurs at positions 236, 245, and 255. The span at 239–251 shows a compositional bias: acidic residues; that stretch reads DGEEGDSENEEMD. Basic and acidic residues predominate over residues 252–264; that stretch reads GDKSKEEKPELDI. The span at 296–309 shows a compositional bias: polar residues; it reads NCPTPGTMPSRSLA.

The protein belongs to the TAF8 family. In terms of assembly, belongs to the TFIID complex which is composed of TATA binding protein (Tbp) and a number of TBP-associated factors (TAFs). Histone fold interacts with N-terminus of Taf10b.

The protein resides in the nucleus. Functionally, TFIID is a multimeric protein complex that plays a central role in mediating promoter responses to various activators and repressors. The chain is Transcription initiation factor TFIID subunit 8 from Drosophila melanogaster (Fruit fly).